Here is a 145-residue protein sequence, read N- to C-terminus: Angiogenin-3 (145 aa).

Residues M1–A24 form the signal peptide. Q25 carries the pyrrolidone carboxylic acid modification. Catalysis depends on H37, which acts as the Proton acceptor. Disulfide bonds link C50-C104, C63-C115, and C81-C130. The Nucleolar localization signal signature appears at K55–L59. E65 and H106 together coordinate Zn(2+). H137 acts as the Proton donor in catalysis.

Belongs to the pancreatic ribonuclease family.

It is found in the cytoplasmic vesicle. The protein resides in the secretory vesicle lumen. It localises to the secreted. Its subcellular location is the nucleus. The protein localises to the nucleolus. With respect to regulation, divalent metal ions, such as Cu2+ and Zn2+, may inhibit the ribonucleolytic activity. Has low ribonuclease activity (in vitro). The chain is Angiogenin-3 (Ang3) from Mus musculus (Mouse).